The following is a 350-amino-acid chain: Methionine import ATP-binding protein MetN (350 aa).

In terms of domain architecture, ABC transporter spans 2–241 (IQIKNLKKEY…PQAPVTRSFV (240 aa)). ATP is bound at residue 38–45 (GHSGAGKS).

The protein belongs to the ABC transporter superfamily. Methionine importer (TC 3.A.1.24) family. As to quaternary structure, the complex is composed of two ATP-binding proteins (MetN), two transmembrane proteins (MetI) and a solute-binding protein (MetQ).

It localises to the cell inner membrane. The enzyme catalyses L-methionine(out) + ATP + H2O = L-methionine(in) + ADP + phosphate + H(+). The catalysed reaction is D-methionine(out) + ATP + H2O = D-methionine(in) + ADP + phosphate + H(+). Functionally, part of the ABC transporter complex MetNIQ involved in methionine import. Responsible for energy coupling to the transport system. The chain is Methionine import ATP-binding protein MetN from Francisella tularensis subsp. tularensis (strain FSC 198).